The primary structure comprises 459 residues: V-type ATP synthase beta chain (459 aa).

This sequence belongs to the ATPase alpha/beta chains family.

Functionally, produces ATP from ADP in the presence of a proton gradient across the membrane. The V-type beta chain is a regulatory subunit. This Clostridium botulinum (strain Alaska E43 / Type E3) protein is V-type ATP synthase beta chain.